The following is a 598-amino-acid chain: Elongation factor 4 (598 aa).

Residues Q2–K184 form the tr-type G domain. GTP-binding positions include D14 to T19 and N131 to D134.

The protein belongs to the TRAFAC class translation factor GTPase superfamily. Classic translation factor GTPase family. LepA subfamily.

The protein resides in the cell inner membrane. It carries out the reaction GTP + H2O = GDP + phosphate + H(+). Required for accurate and efficient protein synthesis under certain stress conditions. May act as a fidelity factor of the translation reaction, by catalyzing a one-codon backward translocation of tRNAs on improperly translocated ribosomes. Back-translocation proceeds from a post-translocation (POST) complex to a pre-translocation (PRE) complex, thus giving elongation factor G a second chance to translocate the tRNAs correctly. Binds to ribosomes in a GTP-dependent manner. In Azoarcus sp. (strain BH72), this protein is Elongation factor 4.